The primary structure comprises 578 residues: Membrane protein insertase YidC (578 aa).

Residues 7–27 traverse the membrane as a helical segment; sequence FLAIAISLGILLGFQGLYRHF. Residues 35–70 are disordered; that stretch reads ARTATNAGQGKPNNTLGAVPTDATASQSPPPKEGAR. Over residues 37–50 the composition is skewed to polar residues; it reads TATNAGQGKPNNTL. 4 consecutive transmembrane segments (helical) span residues 362 to 382, 436 to 456, 491 to 511, and 530 to 550; these read LVGN…AAFY, LPML…FVTI, HISP…TMYL, and FMPI…VIYW.

This sequence belongs to the OXA1/ALB3/YidC family. Type 1 subfamily. As to quaternary structure, interacts with the Sec translocase complex via SecD. Specifically interacts with transmembrane segments of nascent integral membrane proteins during membrane integration.

It is found in the cell inner membrane. Its function is as follows. Required for the insertion and/or proper folding and/or complex formation of integral membrane proteins into the membrane. Involved in integration of membrane proteins that insert both dependently and independently of the Sec translocase complex, as well as at least some lipoproteins. Aids folding of multispanning membrane proteins. In Granulibacter bethesdensis (strain ATCC BAA-1260 / CGDNIH1), this protein is Membrane protein insertase YidC.